The following is a 184-amino-acid chain: UPF0316 protein YebE (184 aa).

Transmembrane regions (helical) follow at residues 9–29 (GIAM…FFTI), 41–61 (LAAG…SLVL), and 67–87 (IQNV…GMKI).

This sequence belongs to the UPF0316 family.

It localises to the cell membrane. The sequence is that of UPF0316 protein YebE (yebE) from Bacillus subtilis (strain 168).